The following is a 72-amino-acid chain: Crustacean hyperglycemic hormone (72 aa).

A Pyrrolidone carboxylic acid; partial modification is found at Q1. Cystine bridges form between C7–C43, C23–C39, and C26–C52. A Valine amide modification is found at V72.

It belongs to the arthropod CHH/MIH/GIH/VIH hormone family. Post-translationally, the N-terminus forms pyrrolidone carboxylic acid in isoform CHH-II and is free in isoform CHH-I. In terms of tissue distribution, produced by the medulla terminalis X-organ in the eyestalks and transported to the sinus gland where they are stored and released.

The protein resides in the secreted. Hormone found in the sinus gland of isopods and decapods which controls the blood sugar level. Has a secretagogue action over the amylase released from the midgut gland. May act as a stress hormone and may be involved in the control of molting and reproduction. The polypeptide is Crustacean hyperglycemic hormone (Cancer pagurus (Rock crab)).